Reading from the N-terminus, the 1100-residue chain is DNA-directed RNA polymerase subunit beta (1100 aa).

Residues 1064–1100 (YEEDKEVDLMADVNQRRTPSRPTYESMSVGDIDDDDD) are disordered. Over residues 1079–1089 (RRTPSRPTYES) the composition is skewed to polar residues.

This sequence belongs to the RNA polymerase beta chain family. In terms of assembly, in cyanobacteria the RNAP catalytic core is composed of 2 alpha, 1 beta, 1 beta', 1 gamma and 1 omega subunit. When a sigma factor is associated with the core the holoenzyme is formed, which can initiate transcription.

The enzyme catalyses RNA(n) + a ribonucleoside 5'-triphosphate = RNA(n+1) + diphosphate. Functionally, DNA-dependent RNA polymerase catalyzes the transcription of DNA into RNA using the four ribonucleoside triphosphates as substrates. This is DNA-directed RNA polymerase subunit beta from Synechococcus elongatus (strain ATCC 33912 / PCC 7942 / FACHB-805) (Anacystis nidulans R2).